A 90-amino-acid polypeptide reads, in one-letter code: Probable Fe(2+)-trafficking protein (90 aa).

Belongs to the Fe(2+)-trafficking protein family.

Could be a mediator in iron transactions between iron acquisition and iron-requiring processes, such as synthesis and/or repair of Fe-S clusters in biosynthetic enzymes. The sequence is that of Probable Fe(2+)-trafficking protein from Verminephrobacter eiseniae (strain EF01-2).